Here is a 440-residue protein sequence, read N- to C-terminus: Protein disulfide-isomerase 2-3 (440 aa).

The signal sequence occupies residues Met1–Ala24. Thioredoxin domains follow at residues Leu25–Lys136 and Ser154–Glu269. Residues Cys60 and Cys63 each act as nucleophile in the active site. Cys60 and Cys63 are disulfide-bonded. The tract at residues Leu143–Ala163 is disordered. Residue Asn168 is glycosylated (N-linked (GlcNAc...) asparagine). Catalysis depends on nucleophile residues Cys192 and Cys195. The cysteines at positions 192 and 195 are disulfide-linked. The short motif at Lys437–Leu440 is the Prevents secretion from ER element.

Belongs to the protein disulfide isomerase family. In terms of tissue distribution, widely expressed.

It is found in the endoplasmic reticulum lumen. It catalyses the reaction Catalyzes the rearrangement of -S-S- bonds in proteins.. Its function is as follows. Acts as a protein-folding catalyst that interacts with nascent polypeptides to catalyze the formation, isomerization, and reduction or oxidation of disulfide bonds. The sequence is that of Protein disulfide-isomerase 2-3 (PDIL2-3) from Arabidopsis thaliana (Mouse-ear cress).